The following is a 304-amino-acid chain: Thyroxine 5-deiodinase (304 aa).

The interval 1-22 is disordered; the sequence is MPRQAASRLVVGEGEGPPGASG. At 1 to 42 the chain is on the cytoplasmic side; it reads MPRQAASRLVVGEGEGPPGASGPAATMLRSLLLHSLRLCAQT. The chain crosses the membrane as a helical; Signal-anchor for type II membrane protein span at residues 43-62; it reads ASCLVLFPRFLGTAFMLWLL. Over 63–304 the chain is Extracellular; that stretch reads DFLCIRKHFL…QLHGTRPRRL (242 aa). Residue U170 is part of the active site. A non-standard amino acid (selenocysteine) is located at residue U170.

The protein belongs to the iodothyronine deiodinase family. Monomer. Homodimer. May undergo minor heretodimerization with DIO1 and DIO2. Neonatal skin, placenta, skeletal muscle and cerebral cortex.

The protein localises to the cell membrane. It localises to the endosome membrane. The catalysed reaction is 3,3',5'-triiodo-L-thyronine + iodide + A + H(+) = L-thyroxine + AH2. The enzyme catalyses 3,3'-diiodo-L-thyronine + iodide + A + H(+) = 3,3',5-triiodo-L-thyronine + AH2. It carries out the reaction 3-iodo-L-thyronine + iodide + A + H(+) = 3,5-diiodo-L-thyronine + AH2. It catalyses the reaction L-thyronine + iodide + A + H(+) = 3-iodo-L-thyronine + AH2. The catalysed reaction is 3',5'-diiodo-L-thyronine + iodide + A + H(+) = 3,3',5'-triiodo-L-thyronine + AH2. The enzyme catalyses 3'-iodo-L-thyronine + iodide + A + H(+) = 3,3'-diiodo-L-thyronine + AH2. It carries out the reaction 3,3',5'-triiodothyronamine + iodide + A + H(+) = 3,3',5,5'-tetraiodothyronamine + AH2. It catalyses the reaction 3',5'-diiodothyronamine + iodide + A + H(+) = 3,3',5'-triiodothyronamine + AH2. The catalysed reaction is 3,3'-diiodothyronamine + iodide + A + H(+) = 3,3',5-triiodothyronamine + AH2. The enzyme catalyses 3-iodothyronamine + iodide + A + H(+) = 3,5-diiodothyronamine + AH2. It carries out the reaction 3'-iodothyronamine + iodide + A + H(+) = 3,3'-diiodothyronamine + AH2. It catalyses the reaction thyronamine + iodide + A + H(+) = 3-iodothyronamine + AH2. Functionally, plays a crucial role in the metabolism of thyroid hormones (TH) and has specific roles in TH activation and inactivation by deiodination. Catalyzes the deiodination of L-thyroxine (T4) to 3,3',5'-triiodothyronine (rT3), 3,5-diiodothyronine (3,5-T2) to 3-monoiodothyronine (3-T1), rT3 to 3',5'-diiodothyronine (3',5'-T2) and 3,3'-diiodothyronine (3,3'-T2) to 3'-monoiodothyronine (3'-T1) via inner-ring deiodination (IRD). Catalyzes the deiodination of 3,5,3'-triiodothyronine (T3) to 3,3'-diiodothyronine (3,3'-T2) via IRD. Catalyzes the deiodination of 3-T1 to L-thyronine (T0) via outer-ring deiodination (ORD). Catalyzes the tyrosyl ring deiodinations of T4AM (3,3',5,5'-tetraiodothyronamine), rT3AM (3,3',5'-triiodothyronamine), T3AM (3,5,3'-triiodothyronamine), 3,5-T2AM (3,5-diiodothyronamine), 3,3'-T2AM (3,3'-diiodothyronamine) and 3-T1AM (3-iodothyronamine). In Rattus norvegicus (Rat), this protein is Thyroxine 5-deiodinase (Dio3).